A 176-amino-acid polypeptide reads, in one-letter code: Cytochrome b (176 aa).

A run of 3 helical transmembrane segments spans residues 33–53 (FGSL…FLAM), 77–98 (WLLR…YLHI), and 113–133 (WNVG…GYVL). Heme b contacts are provided by His83 and His97.

Belongs to the cytochrome b family. In terms of assembly, the cytochrome bc1 complex contains 11 subunits: 3 respiratory subunits (MT-CYB, CYC1 and UQCRFS1), 2 core proteins (UQCRC1 and UQCRC2) and 6 low-molecular weight proteins (UQCRH/QCR6, UQCRB/QCR7, UQCRQ/QCR8, UQCR10/QCR9, UQCR11/QCR10 and a cleavage product of UQCRFS1). This cytochrome bc1 complex then forms a dimer. Heme b serves as cofactor.

The protein localises to the mitochondrion inner membrane. Functionally, component of the ubiquinol-cytochrome c reductase complex (complex III or cytochrome b-c1 complex) that is part of the mitochondrial respiratory chain. The b-c1 complex mediates electron transfer from ubiquinol to cytochrome c. Contributes to the generation of a proton gradient across the mitochondrial membrane that is then used for ATP synthesis. This chain is Cytochrome b (MT-CYB), found in Eumops perotis (Western bonneted bat).